The sequence spans 91 residues: Large ribosomal subunit protein bL31B (91 aa).

Belongs to the bacterial ribosomal protein bL31 family. Type B subfamily. As to quaternary structure, part of the 50S ribosomal subunit.

This Neisseria meningitidis serogroup A / serotype 4A (strain DSM 15465 / Z2491) protein is Large ribosomal subunit protein bL31B.